The following is a 498-amino-acid chain: Glycerol kinase (498 aa).

An ADP-binding site is contributed by Thr-12. 3 residues coordinate ATP: Thr-12, Thr-13, and Ser-14. Thr-12 is a sn-glycerol 3-phosphate binding site. Arg-16 is an ADP binding site. Sn-glycerol 3-phosphate contacts are provided by Arg-82, Glu-83, Tyr-134, and Asp-244. Glycerol is bound by residues Arg-82, Glu-83, Tyr-134, Asp-244, and Gln-245. 2 residues coordinate ADP: Thr-266 and Gly-310. ATP contacts are provided by Thr-266, Gly-310, Gln-314, and Gly-411. 2 residues coordinate ADP: Gly-411 and Asn-415.

The protein belongs to the FGGY kinase family.

It carries out the reaction glycerol + ATP = sn-glycerol 3-phosphate + ADP + H(+). It functions in the pathway polyol metabolism; glycerol degradation via glycerol kinase pathway; sn-glycerol 3-phosphate from glycerol: step 1/1. Its activity is regulated as follows. Inhibited by fructose 1,6-bisphosphate (FBP). Functionally, key enzyme in the regulation of glycerol uptake and metabolism. Catalyzes the phosphorylation of glycerol to yield sn-glycerol 3-phosphate. The sequence is that of Glycerol kinase from Chloroflexus aggregans (strain MD-66 / DSM 9485).